The sequence spans 292 residues: Elongation factor Ts (292 aa).

The interval 82–85 (TDFV) is involved in Mg(2+) ion dislocation from EF-Tu.

Belongs to the EF-Ts family.

The protein localises to the cytoplasm. Its function is as follows. Associates with the EF-Tu.GDP complex and induces the exchange of GDP to GTP. It remains bound to the aminoacyl-tRNA.EF-Tu.GTP complex up to the GTP hydrolysis stage on the ribosome. This chain is Elongation factor Ts, found in Bordetella petrii (strain ATCC BAA-461 / DSM 12804 / CCUG 43448).